Here is a 357-residue protein sequence, read N- to C-terminus: Phosphate acyltransferase (357 aa).

It belongs to the PlsX family. As to quaternary structure, homodimer. Probably interacts with PlsY.

The protein resides in the cytoplasm. It catalyses the reaction a fatty acyl-[ACP] + phosphate = an acyl phosphate + holo-[ACP]. Its pathway is lipid metabolism; phospholipid metabolism. In terms of biological role, catalyzes the reversible formation of acyl-phosphate (acyl-PO(4)) from acyl-[acyl-carrier-protein] (acyl-ACP). This enzyme utilizes acyl-ACP as fatty acyl donor, but not acyl-CoA. The chain is Phosphate acyltransferase from Roseobacter denitrificans (strain ATCC 33942 / OCh 114) (Erythrobacter sp. (strain OCh 114)).